Consider the following 503-residue polypeptide: Lycopene beta cyclase, chloroplastic/chromoplastic (503 aa).

The transit peptide at 1-85 (MDTLLRTHNR…DLPLYDPSKA (85 aa)) directs the protein to the chloroplast and chromoplast. An NAD(+)-binding site is contributed by 90–117 (LAVVGGGPLARSCSTSLGGGLSVVSIDP).

This sequence belongs to the lycopene cyclase family.

It is found in the plastid. Its subcellular location is the chloroplast. The protein localises to the chromoplast. It localises to the chromoplast membrane. The protein resides in the chloroplast membrane. It catalyses the reaction a carotenoid psi-end group = a carotenoid beta-end derivative. The protein operates within carotenoid biosynthesis; beta-carotene biosynthesis. It functions in the pathway carotenoid biosynthesis; beta-zeacarotene biosynthesis. Functionally, catalyzes the double cyclization reaction which converts lycopene to beta-carotene and neurosporene to beta-zeacarotene. The polypeptide is Lycopene beta cyclase, chloroplastic/chromoplastic (LCY1) (Narcissus pseudonarcissus (Daffodil)).